Consider the following 475-residue polypeptide: Melanopsin (475 aa).

The Extracellular portion of the chain corresponds to 1–21 (MGTQHRIKVDVPDRVLYTVGS). The chain crosses the membrane as a helical span at residues 22–42 (CVLVIGSIGITGNLLVLYAFY). Residues 43–53 (SNKRLRTPANY) lie on the Cytoplasmic side of the membrane. A helical transmembrane segment spans residues 54–74 (FIMNLAASDFLMSATQAPICF). At 75-90 (LNSMHTEWILGDIGCN) the chain is on the extracellular side. Residues Cys-89 and Cys-167 are joined by a disulfide bond. The helical transmembrane segment at 91–111 (FYVFCGALFGITSMMTLLAIS) threads the bilayer. Over 112–134 (VDRYCVITKPLQSIKRSSKKRSC) the chain is Cytoplasmic. A helical membrane pass occupies residues 135-155 (IIIAFVWLYSLGWSVCPLFGW). Residues 156–187 (SSYIPEGLMISCTWDYVSYSPANRSYTMMLCC) are Extracellular-facing. A glycan (N-linked (GlcNAc...) asparagine) is linked at Asn-178. Residues 188 to 208 (FVFFIPLIIIFHCYLFMFLAI) traverse the membrane as a helical segment. The Cytoplasmic portion of the chain corresponds to 209–240 (RSTGRNVQKLGSTYNRKSNVSQSVKSEWKLAK). A helical transmembrane segment spans residues 241–261 (IAFVAIVVFVLSWSPYACVTL). Over 262–276 (IAWAGYAKTLNPYSK) the chain is Extracellular. The chain crosses the membrane as a helical span at residues 277–297 (SVPAVIAKASAIYNPIIYAII). Position 284 is an N6-(retinylidene)lysine (Lys-284). Topologically, residues 298–475 (HPRYRRTIRS…EQHQMEASSH (178 aa)) are cytoplasmic. Disordered stretches follow at residues 370 to 390 (VEAA…KQAE) and 445 to 475 (PFGL…ASSH). The span at 375–384 (KKQQPHRSRS) shows a compositional bias: basic residues. Over residues 445–454 (PFGLNSSSTE) the composition is skewed to polar residues. Residues 455-464 (ENADTSDMEV) are compositionally biased toward acidic residues. Residues 465–475 (QEQHQMEASSH) show a composition bias toward basic and acidic residues.

This sequence belongs to the G-protein coupled receptor 1 family. Opsin subfamily. As to expression, highest level in the lateral eye. Low level in the brain.

The protein resides in the cell membrane. In terms of biological role, photoreceptor implicated in non-image-forming responses to light. May be able to isomerize covalently bound all-trans retinal back to 11-cis retinal. This is Melanopsin (OPN4) from Podarcis siculus (Italian wall lizard).